The chain runs to 85 residues: Kunitz-type serine protease inhibitor homolog beta-bungarotoxin B2 chain (85 aa).

The first 24 residues, 1-24 (MSSGGLLLLLGLLTLCAELTPVSS), serve as a signal peptide directing secretion. The BPTI/Kunitz inhibitor domain maps to 31-81 (CDKPPDTKICQTVVRAFYYKPSAKRCVQFRYGGCNGNGNHFKSDHLCRCEC). Disulfide bonds link Cys-31–Cys-81, Cys-40–Cys-64, and Cys-56–Cys-77.

Belongs to the venom Kunitz-type family. Heterodimer; disulfide-linked. The A chains have phospholipase A2 activity and the B chains show homology with the basic protease inhibitors. In terms of tissue distribution, expressed by the venom gland.

It localises to the secreted. Its function is as follows. Beta-2-bungarotoxin is a presynaptic neurotoxin of the venom. The B chain is homologous to venom basic protease inhibitors but has no protease inhibitor activity and blocks voltage-gated potassium channels (Kv). The sequence is that of Kunitz-type serine protease inhibitor homolog beta-bungarotoxin B2 chain from Bungarus multicinctus (Many-banded krait).